A 271-amino-acid polypeptide reads, in one-letter code: Formamidopyrimidine-DNA glycosylase (271 aa).

Catalysis depends on proline 2, which acts as the Schiff-base intermediate with DNA. Glutamate 3 serves as the catalytic Proton donor. The Proton donor; for beta-elimination activity role is filled by lysine 58. DNA contacts are provided by histidine 90, arginine 108, and arginine 151. The FPG-type; degenerate zinc finger occupies 236–271 (QVYGRDGQPCHRDDGGTIRRFAQGGRSTWYCPRCQR). Arginine 261 acts as the Proton donor; for delta-elimination activity in catalysis.

The protein belongs to the FPG family. Monomer. Zn(2+) is required as a cofactor.

The enzyme catalyses Hydrolysis of DNA containing ring-opened 7-methylguanine residues, releasing 2,6-diamino-4-hydroxy-5-(N-methyl)formamidopyrimidine.. It catalyses the reaction 2'-deoxyribonucleotide-(2'-deoxyribose 5'-phosphate)-2'-deoxyribonucleotide-DNA = a 3'-end 2'-deoxyribonucleotide-(2,3-dehydro-2,3-deoxyribose 5'-phosphate)-DNA + a 5'-end 5'-phospho-2'-deoxyribonucleoside-DNA + H(+). In terms of biological role, involved in base excision repair of DNA damaged by oxidation or by mutagenic agents. Acts as a DNA glycosylase that recognizes and removes damaged bases. Has a preference for oxidized purines, such as 7,8-dihydro-8-oxoguanine (8-oxoG). Has AP (apurinic/apyrimidinic) lyase activity and introduces nicks in the DNA strand. Cleaves the DNA backbone by beta-delta elimination to generate a single-strand break at the site of the removed base with both 3'- and 5'-phosphates. The chain is Formamidopyrimidine-DNA glycosylase from Erythrobacter litoralis (strain HTCC2594).